A 50-amino-acid chain; its full sequence is Light-harvesting protein B-880 alpha chain (50 aa).

Topologically, residues 1–12 are cytoplasmic; it reads MYKLWLLFDPRR. The chain crosses the membrane as a helical span at residues 13 to 33; sequence ALVALSAFLFVLALIIHFIAL. H29 contacts a bacteriochlorophyll. Residues 34–50 are Periplasmic-facing; sequence STDRFNWLEGKPAVKAA.

This sequence belongs to the antenna complex alpha subunit family. In terms of assembly, the core complex is formed by different alpha and beta chains, binding bacteriochlorophyll molecules, and arranged most probably in tetrameric structures disposed around the reaction center. The non-pigmented gamma chains may constitute additional components.

It localises to the cell inner membrane. Antenna complexes are light-harvesting systems, which transfer the excitation energy to the reaction centers. The chain is Light-harvesting protein B-880 alpha chain from Rhodoblastus acidophilus (Rhodopseudomonas acidophila).